A 66-amino-acid chain; its full sequence is Large ribosomal subunit protein bL35 (66 aa).

Residues 1 to 26 are compositionally biased toward basic residues; the sequence is MPKMKTHRGAAKRVKRTASGKLKRSR. A disordered region spans residues 1-49; sequence MPKMKTHRGAAKRVKRTASGKLKRSRAFTSHLFANKSTKQKRKLRKASL.

It belongs to the bacterial ribosomal protein bL35 family.

The chain is Large ribosomal subunit protein bL35 from Staphylococcus carnosus (strain TM300).